A 161-amino-acid polypeptide reads, in one-letter code: MSNEEPEKMVNDRIVVKAIEPKDEEAWNKLWKEYQGFQKTVMPPEVATTTFARFIDPTVKLWGALAFDTETGDAIGFAHYLNHLTSWHVEEVVYMNDLYVTERARVKGVGRKLIEFVYSRADELGTPAVYWVTDHYNHRAQLLYTKVAYKTDKVLYKRNGY.

Position 2 is an N-acetylserine (Ser2). The N-acetyltransferase domain maps to Ile14–Tyr161. Leu98 to Arg111 provides a ligand contact to acetyl-CoA.

The protein belongs to the acetyltransferase family. GNAT subfamily. Post-translationally, autoacetylates in an intermolecular reaction.

Its subcellular location is the cytoplasm. It is found in the nucleus. The enzyme catalyses a D-alpha-amino acid + acetyl-CoA = an N-acetyl-D-amino acid + CoA + H(+). Functionally, N-acetyltransferase that acts on a wide range of D-amino acids. Catalyzes the N-acetylation through an ordered bi-bi mechanism, in which acetyl-CoA is the first substrate to be bound and CoA is the last product to be liberated. D-amino acids are toxic for the cell and their N-acetylation, preceding removal from cells, plays an important role in detoxification of D-amino acids. In vitro, capable of acetylating histone H4 at 'Lys-8' and polyamines like putrescine, spermidine and spermine. This is D-amino-acid N-acetyltransferase HPA3 from Saccharomyces cerevisiae (strain ATCC 204508 / S288c) (Baker's yeast).